Here is an 832-residue protein sequence, read N- to C-terminus: Spindle pole body component alp6 (832 aa).

The tract at residues 1 to 186 (MSEIHVKTAL…STETSSVQHT (186 aa)) is interaction with mzt1. Position 286 is a phosphothreonine (Thr286).

The protein belongs to the TUBGCP family. In terms of assembly, part of the gamma-tubulin complex. Interacts directly with mzt1. Interacts with mto1. Interacts with mto2.

Its subcellular location is the cytoplasm. The protein localises to the cytoskeleton. It is found in the microtubule organizing center. The protein resides in the spindle pole body. Component of the gamma tubule complex that is required for the regulation of both interphase microtubules and mitotic bipolar spindles. The chain is Spindle pole body component alp6 (alp6) from Schizosaccharomyces pombe (strain 972 / ATCC 24843) (Fission yeast).